The primary structure comprises 115 residues: Ig heavy chain V region PJ14 (115 aa).

An N-terminal signal peptide occupies residues 1-19 (MAVLALLFCLVTFPSCILS). Residues 20-115 (QVQLKESGPG…TDDTARYYCA (96 aa)) form the Ig-like domain.

In Mus musculus (Mouse), this protein is Ig heavy chain V region PJ14.